Here is a 38-residue protein sequence, read N- to C-terminus: RapG inhibitor (38 aa).

Positions 1-33 (MKRFLIGAGVAAVILSGWFIADHQTHSQEMKVA) are excised as a propeptide.

The protein belongs to the Phr family. Contains a predicted signal peptide cleavage site in the N-terminal region, however the propeptide is probably subject to only one processing event, at the N-terminal end of the mature peptide.

It localises to the secreted. Its subcellular location is the cytoplasm. Functionally, signaling molecule involved in the regulation of expression of DegU-controlled genes. Secreted during production, but the mature peptide acts intracellularly, indicating that it needs to be imported into the cell to function. Stimulates the DegU-dependent expression of aprE, an extracellular alkaline protease. Acts by inhibiting RapG activity. At high concentrations, represses the DegS-dependent aprE expression. The protein is RapG inhibitor (phrG) of Bacillus subtilis (strain 168).